A 109-amino-acid polypeptide reads, in one-letter code: Nucleoid-associated protein SO_2014 (109 aa).

This sequence belongs to the YbaB/EbfC family. In terms of assembly, homodimer.

The protein localises to the cytoplasm. Its subcellular location is the nucleoid. Its function is as follows. Binds to DNA and alters its conformation. May be involved in regulation of gene expression, nucleoid organization and DNA protection. This Shewanella oneidensis (strain ATCC 700550 / JCM 31522 / CIP 106686 / LMG 19005 / NCIMB 14063 / MR-1) protein is Nucleoid-associated protein SO_2014.